The sequence spans 206 residues: Ras-related protein RABG3e (206 aa).

A GTP-binding site is contributed by 15 to 22; it reads GDSGVGKT. The Effector region signature appears at 37 to 45; sequence YKATIGADF. GTP contacts are provided by residues 63 to 67, 125 to 128, and 158 to 159; these read DTAGQ, NKID, and SA. Residues Cys204 and Cys206 are each lipidated (S-geranylgeranyl cysteine). Position 206 is a cysteine methyl ester (Cys206).

The protein belongs to the small GTPase superfamily. Rab family.

The protein resides in the cell membrane. Intracellular vesicle trafficking and protein transport. May play a role in adaptation to stress by recylcing macromolecules in specific cellular compartments. The chain is Ras-related protein RABG3e (RABG3E) from Arabidopsis thaliana (Mouse-ear cress).